Consider the following 1861-residue polypeptide: Amylopullulanase (1861 aa).

The N-terminal stretch at 1-35 (MNKKLFTNRFISFNMSLLLVLTAVFSSIPLHSVHA) is a signal peptide. Residues aspartate 248, asparagine 250, aspartate 288, aspartate 343, asparagine 401, aspartate 403, asparagine 406, aspartate 407, and aspartate 453 each coordinate Ca(2+). Histidine 526 and arginine 626 together coordinate substrate. Aspartate 628 serves as the catalytic Nucleophile. Catalysis depends on glutamate 657, which acts as the Proton donor. Substrate is bound by residues 733 to 734 (HD), aspartate 793, and arginine 797. Fibronectin type-III domains lie at 929–1021 (APQA…AYPI) and 1158–1252 (KPTA…VVPI). In terms of domain architecture, CBM20 spans 1246–1354 (KPDVVPIKVI…INDTVYRWRD (109 aa)). Residues 1448-1486 (QENNSGSGTGNNNTSTSGSNSSSTGSGSTGSTSITSNIS) form a disordered region. Residues 1450-1486 (NNSGSGTGNNNTSTSGSNSSSTGSGSTGSTSITSNIS) are compositionally biased toward low complexity. SLH domains follow at residues 1677-1740 (EYDK…YSGE), 1741-1799 (FSDV…KEEN), and 1802-1861 (ATTF…SGNI).

This sequence belongs to the glycosyl hydrolase 13 family. Ca(2+) is required as a cofactor. Glycosylated.

It is found in the secreted. It localises to the cell wall. The catalysed reaction is Endohydrolysis of (1-&gt;4)-alpha-D-glucosidic linkages in polysaccharides containing three or more (1-&gt;4)-alpha-linked D-glucose units.. It carries out the reaction Hydrolysis of (1-&gt;6)-alpha-D-glucosidic linkages in pullulan, amylopectin and glycogen, and in the alpha- and beta-limit dextrins of amylopectin and glycogen.. The sequence is that of Amylopullulanase (amyB) from Thermoanaerobacterium thermosulfurigenes (Clostridium thermosulfurogenes).